A 398-amino-acid chain; its full sequence is Acetate kinase (398 aa).

Asn-10 contacts Mg(2+). Lys-17 contacts ATP. Substrate is bound at residue Arg-91. Catalysis depends on Asp-148, which acts as the Proton donor/acceptor. ATP contacts are provided by residues 208-212 (HLGNG), 283-285 (DCR), and 331-335 (GIGEN). Glu-385 contacts Mg(2+).

Belongs to the acetokinase family. As to quaternary structure, homodimer. Mg(2+) serves as cofactor. It depends on Mn(2+) as a cofactor.

It localises to the cytoplasm. The enzyme catalyses acetate + ATP = acetyl phosphate + ADP. The protein operates within metabolic intermediate biosynthesis; acetyl-CoA biosynthesis; acetyl-CoA from acetate: step 1/2. Its function is as follows. Catalyzes the formation of acetyl phosphate from acetate and ATP. Can also catalyze the reverse reaction. The sequence is that of Acetate kinase from Shewanella loihica (strain ATCC BAA-1088 / PV-4).